The primary structure comprises 169 residues: Phosphopantetheine adenylyltransferase (169 aa).

Residue Thr9 participates in substrate binding. ATP is bound by residues 9–10 (TF) and His17. Substrate is bound by residues Lys41, Leu73, and Arg87. ATP is bound by residues 88–90 (GLR), Glu98, and 123–129 (YQFISGT).

This sequence belongs to the bacterial CoaD family. In terms of assembly, homohexamer. Mg(2+) is required as a cofactor.

It localises to the cytoplasm. It carries out the reaction (R)-4'-phosphopantetheine + ATP + H(+) = 3'-dephospho-CoA + diphosphate. It functions in the pathway cofactor biosynthesis; coenzyme A biosynthesis; CoA from (R)-pantothenate: step 4/5. Functionally, reversibly transfers an adenylyl group from ATP to 4'-phosphopantetheine, yielding dephospho-CoA (dPCoA) and pyrophosphate. This Bordetella bronchiseptica (strain ATCC BAA-588 / NCTC 13252 / RB50) (Alcaligenes bronchisepticus) protein is Phosphopantetheine adenylyltransferase.